Here is a 410-residue protein sequence, read N- to C-terminus: Diguanylate cyclase DgcM (410 aa).

PAS domains follow at residues 3-70 (THNF…NQHD) and 129-198 (GFYA…HLPG). The 53-residue stretch at 199–251 (GHKPLNFIHKLADGSTRHVQTYAGPIEIYGDKLMLCIVHDITEQKRLEEQLEH) folds into the PAC domain. A GGDEF domain is found at 283 to 410 (QDYSLLLIDT…NDGRNRVLAA (128 aa)). Asp-291 serves as a coordination point for Mg(2+). 3 residues coordinate substrate: Asn-299, His-304, and Asp-308. Glu-334 lines the Mg(2+) pocket. Residue Glu-334 is the Proton acceptor of the active site.

Requires Mg(2+) as cofactor.

The catalysed reaction is 2 GTP = 3',3'-c-di-GMP + 2 diphosphate. The protein operates within purine metabolism; 3',5'-cyclic di-GMP biosynthesis. Functionally, part of a signaling cascade that regulates curli biosynthesis. The cascade is composed of two cyclic-di-GMP (c-di-GMP) control modules, in which c-di-GMP controlled by the DgcE/PdeH pair (module I) regulates the activity of the DgcM/PdeR pair (module II), which in turn regulates activity of the transcription factor MlrA and expression of the master biofilm regulator csgD. This Escherichia coli O157:H7 protein is Diguanylate cyclase DgcM.